The following is a 100-amino-acid chain: Aspartyl/glutamyl-tRNA(Asn/Gln) amidotransferase subunit C (100 aa).

The protein belongs to the GatC family. Heterotrimer of A, B and C subunits.

It catalyses the reaction L-glutamyl-tRNA(Gln) + L-glutamine + ATP + H2O = L-glutaminyl-tRNA(Gln) + L-glutamate + ADP + phosphate + H(+). It carries out the reaction L-aspartyl-tRNA(Asn) + L-glutamine + ATP + H2O = L-asparaginyl-tRNA(Asn) + L-glutamate + ADP + phosphate + 2 H(+). Its function is as follows. Allows the formation of correctly charged Asn-tRNA(Asn) or Gln-tRNA(Gln) through the transamidation of misacylated Asp-tRNA(Asn) or Glu-tRNA(Gln) in organisms which lack either or both of asparaginyl-tRNA or glutaminyl-tRNA synthetases. The reaction takes place in the presence of glutamine and ATP through an activated phospho-Asp-tRNA(Asn) or phospho-Glu-tRNA(Gln). The sequence is that of Aspartyl/glutamyl-tRNA(Asn/Gln) amidotransferase subunit C from Streptococcus pneumoniae (strain Hungary19A-6).